A 256-amino-acid chain; its full sequence is Protein N-terminal and lysine N-methyltransferase EFM7 (256 aa).

The segment at methionine 1 to lysine 26 is disordered. S-adenosyl-L-methionine contacts are provided by residues tryptophan 64, glycine 90 to alanine 92, aspartate 112, tryptophan 145, and serine 168.

This sequence belongs to the class I-like SAM-binding methyltransferase superfamily. EFM7 family.

It localises to the cytoplasm. Its function is as follows. S-adenosyl-L-methionine-dependent protein methyltransferase that trimethylates the N-terminal glycine 'Gly-2' of elongation factor 1-alpha, before also catalyzing the mono- and dimethylation of 'Lys-3'. The polypeptide is Protein N-terminal and lysine N-methyltransferase EFM7 (Candida glabrata (strain ATCC 2001 / BCRC 20586 / JCM 3761 / NBRC 0622 / NRRL Y-65 / CBS 138) (Yeast)).